The following is a 266-amino-acid chain: Hydroxymethylpyrimidine/phosphomethylpyrimidine kinase (266 aa).

Glutamine 44 contributes to the 4-amino-5-hydroxymethyl-2-methylpyrimidine binding site.

The protein belongs to the ThiD family. In terms of assembly, homodimer.

It carries out the reaction 4-amino-5-hydroxymethyl-2-methylpyrimidine + ATP = 4-amino-2-methyl-5-(phosphooxymethyl)pyrimidine + ADP + H(+). The catalysed reaction is 4-amino-2-methyl-5-(phosphooxymethyl)pyrimidine + ATP = 4-amino-2-methyl-5-(diphosphooxymethyl)pyrimidine + ADP. It participates in cofactor biosynthesis; thiamine diphosphate biosynthesis; 4-amino-2-methyl-5-diphosphomethylpyrimidine from 5-amino-1-(5-phospho-D-ribosyl)imidazole: step 2/3. Its pathway is cofactor biosynthesis; thiamine diphosphate biosynthesis; 4-amino-2-methyl-5-diphosphomethylpyrimidine from 5-amino-1-(5-phospho-D-ribosyl)imidazole: step 3/3. Catalyzes the phosphorylation of hydroxymethylpyrimidine phosphate (HMP-P) to HMP-PP, and of HMP to HMP-P. The chain is Hydroxymethylpyrimidine/phosphomethylpyrimidine kinase (thiD) from Salmonella typhimurium (strain LT2 / SGSC1412 / ATCC 700720).